The chain runs to 154 residues: Large ribosomal subunit protein uL13 (154 aa).

It belongs to the universal ribosomal protein uL13 family. Part of the 50S ribosomal subunit.

Its function is as follows. This protein is one of the early assembly proteins of the 50S ribosomal subunit, although it is not seen to bind rRNA by itself. It is important during the early stages of 50S assembly. The protein is Large ribosomal subunit protein uL13 of Rhizobium etli (strain CIAT 652).